The primary structure comprises 261 residues: Glucose 1-dehydrogenase 2 (261 aa).

11–35 (VVTGGSKGLGRAMAVRFGQEQSKVV) contributes to the NADP(+) binding site. S145 provides a ligand contact to substrate. Y158 acts as the Proton acceptor in catalysis.

Belongs to the short-chain dehydrogenases/reductases (SDR) family. In terms of assembly, homotetramer.

It catalyses the reaction D-glucose + NAD(+) = D-glucono-1,5-lactone + NADH + H(+). The enzyme catalyses D-glucose + NADP(+) = D-glucono-1,5-lactone + NADPH + H(+). This is Glucose 1-dehydrogenase 2 (gdhII) from Priestia megaterium (Bacillus megaterium).